We begin with the raw amino-acid sequence, 178 residues long: Ribosome maturation factor RimP (178 aa).

The protein belongs to the RimP family.

It localises to the cytoplasm. Functionally, required for maturation of 30S ribosomal subunits. This Streptococcus pyogenes serotype M4 (strain MGAS10750) protein is Ribosome maturation factor RimP.